A 496-amino-acid chain; its full sequence is Apolipoprotein N-acyltransferase (496 aa).

Transmembrane regions (helical) follow at residues 23–43 (GIAT…FILW), 50–70 (LANF…LYEL), 84–104 (LIIS…LVYL), 126–146 (LTIK…ILSQ), 171–191 (WIGA…IYLI), and 205–225 (FLFG…TNPI). Residues 236–464 (WQTNMPTREK…NDVVNPNFSI (229 aa)) form the CN hydrolase domain. The Proton acceptor role is filled by glutamate 276. Lysine 325 is an active-site residue. Residue cysteine 374 is the Nucleophile of the active site. A helical membrane pass occupies residues 476–496 (PLFLLCLFLIGLNLYFGKFTN).

It belongs to the CN hydrolase family. Apolipoprotein N-acyltransferase subfamily.

It is found in the cell inner membrane. The enzyme catalyses N-terminal S-1,2-diacyl-sn-glyceryl-L-cysteinyl-[lipoprotein] + a glycerophospholipid = N-acyl-S-1,2-diacyl-sn-glyceryl-L-cysteinyl-[lipoprotein] + a 2-acyl-sn-glycero-3-phospholipid + H(+). Its pathway is protein modification; lipoprotein biosynthesis (N-acyl transfer). Catalyzes the phospholipid dependent N-acylation of the N-terminal cysteine of apolipoprotein, the last step in lipoprotein maturation. The protein is Apolipoprotein N-acyltransferase of Prochlorococcus marinus subsp. pastoris (strain CCMP1986 / NIES-2087 / MED4).